The sequence spans 370 residues: Flagellar P-ring protein (370 aa).

The N-terminal stretch at 1–24 (MTLSKWILSFGLSVCLIVSHPVSA) is a signal peptide.

Belongs to the FlgI family. In terms of assembly, the basal body constitutes a major portion of the flagellar organelle and consists of four rings (L,P,S, and M) mounted on a central rod.

The protein resides in the periplasm. It is found in the bacterial flagellum basal body. In terms of biological role, assembles around the rod to form the L-ring and probably protects the motor/basal body from shearing forces during rotation. This Nitrosomonas europaea (strain ATCC 19718 / CIP 103999 / KCTC 2705 / NBRC 14298) protein is Flagellar P-ring protein.